Here is a 172-residue protein sequence, read N- to C-terminus: Large ribosomal subunit protein uL10 (172 aa).

This sequence belongs to the universal ribosomal protein uL10 family. As to quaternary structure, part of the ribosomal stalk of the 50S ribosomal subunit. The N-terminus interacts with L11 and the large rRNA to form the base of the stalk. The C-terminus forms an elongated spine to which L12 dimers bind in a sequential fashion forming a multimeric L10(L12)X complex.

Functionally, forms part of the ribosomal stalk, playing a central role in the interaction of the ribosome with GTP-bound translation factors. This is Large ribosomal subunit protein uL10 from Rhizobium rhizogenes (strain K84 / ATCC BAA-868) (Agrobacterium radiobacter).